The sequence spans 538 residues: Atos homolog protein B (538 aa).

Disordered stretches follow at residues methionine 1–serine 103, glycine 130–asparagine 149, proline 163–threonine 185, and lysine 199–proline 272. The span at glycine 130–serine 148 shows a compositional bias: low complexity. Pro residues predominate over residues histidine 227 to cysteine 238. Residues serine 254 and serine 255 each carry the phosphoserine modification. The interval leucine 348–threonine 430 is required for macropage invasion. The tract at residues glutamine 436–valine 444 is transactivation domain 1 (TAD1).

The protein belongs to the ATOS family.

It is found in the nucleus. Functionally, transcription regulator that may syncronize transcriptional and translational programs. This Rattus norvegicus (Rat) protein is Atos homolog protein B.